The sequence spans 249 residues: 5'-nucleotidase SurE (249 aa).

Residues Asp8, Asp9, Ser39, and Asn91 each contribute to the a divalent metal cation site.

Belongs to the SurE nucleotidase family. A divalent metal cation serves as cofactor.

It is found in the cytoplasm. The catalysed reaction is a ribonucleoside 5'-phosphate + H2O = a ribonucleoside + phosphate. Functionally, nucleotidase that shows phosphatase activity on nucleoside 5'-monophosphates. The polypeptide is 5'-nucleotidase SurE (Pseudomonas paraeruginosa (strain DSM 24068 / PA7) (Pseudomonas aeruginosa (strain PA7))).